The following is a 712-amino-acid chain: Polyribonucleotide nucleotidyltransferase (712 aa).

Residues aspartate 487 and aspartate 493 each coordinate Mg(2+). The KH domain maps to 554 to 613 (PKILTMQINPEKIREVIGPSGKQINKIIDETGVKIDIEQDGTIFISSVNEAMNQKAKQII). An S1 motif domain is found at 623-691 (GQIYLGKVKR…KQGRVNLSRK (69 aa)).

It belongs to the polyribonucleotide nucleotidyltransferase family. Mg(2+) serves as cofactor.

Its subcellular location is the cytoplasm. The catalysed reaction is RNA(n+1) + phosphate = RNA(n) + a ribonucleoside 5'-diphosphate. Involved in mRNA degradation. Catalyzes the phosphorolysis of single-stranded polyribonucleotides processively in the 3'- to 5'-direction. This is Polyribonucleotide nucleotidyltransferase from Geobacillus sp. (strain WCH70).